Consider the following 213-residue polypeptide: Homeobox protein koza (213 aa).

Positions 24–72 (ILSHMGPGSKEKSLGFPKTDQDQDSSLRDTEEKYASEKLQSSSQPAEIH) are disordered. A compositionally biased stretch (basic and acidic residues) spans 32-59 (SKEKSLGFPKTDQDQDSSLRDTEEKYAS). A DNA-binding region (homeobox) is located at residues 102–161 (QKRSRAAFSHSQVIELERKFSSQKYLSAPERAQLAKSLKLTETQVKIWFQNRRYKTKRKQ).

Belongs to the NK-3 homeobox family. As to expression, expressed in the muscle layer of embryonic somites. In tailbud embryos, expressed throughout the entire myotome but at the mid-tailbud stage (stage 32), expression becomes restricted to the outer periphery of the somite so that by the tadpole stage only the outer, type I cells show expression. Also expressed in the dorsal cement gland and in the myocardial layer of the developing heart. In all tissues, expression begins after terminal differentiation.

The protein resides in the nucleus. In terms of biological role, may regulate cell proliferation in a tissue-specific manner. The protein is Homeobox protein koza of Xenopus laevis (African clawed frog).